Here is a 188-residue protein sequence, read N- to C-terminus: dCTP deaminase (188 aa).

Residues 111–116, 135–137, Q156, Y170, and Q180 contribute to the dCTP site; these read KSTYAR and TLE. The Proton donor/acceptor role is filled by E137.

This sequence belongs to the dCTP deaminase family. As to quaternary structure, homotrimer.

The enzyme catalyses dCTP + H2O + H(+) = dUTP + NH4(+). It participates in pyrimidine metabolism; dUMP biosynthesis; dUMP from dCTP (dUTP route): step 1/2. Its function is as follows. Catalyzes the deamination of dCTP to dUTP. In Nitrosomonas eutropha (strain DSM 101675 / C91 / Nm57), this protein is dCTP deaminase.